Reading from the N-terminus, the 61-residue chain is uncharacterized protein (61 aa).

2 helical membrane-spanning segments follow: residues 4–24 and 34–54; these read IIAF…VASM and SSVI…IMPM.

It is found in the cell membrane. This is an uncharacterized protein from Bacillus subtilis (strain 168).